Here is a 129-residue protein sequence, read N- to C-terminus: uncharacterized protein (129 aa).

Positions 1-17 (MCPECFFLMLFFCGYRA) are cleaved as a signal peptide. The segment covering 26–36 (SSSSSSSFRSS) has biased composition (low complexity). The tract at residues 26–76 (SSSSSSSFRSSPAYGFSGRPPGGAGCRERSQRSCLRPGGLPSLTRNPGLQR) is disordered.

This is an uncharacterized protein from Escherichia coli O157:H7.